The following is a 647-amino-acid chain: Microtubule-associated protein 9 (647 aa).

Position 2 is an N-acetylserine (Ser2). Residue Tyr12 is modified to Phosphotyrosine. 6 disordered regions span residues Lys127–Met323, Ser344–Ala421, Lys491–Gln514, Lys530–Lys553, Asn580–Ile600, and Gln613–Phe647. Basic and acidic residues predominate over residues Gln133–Lys145. Residues Ile155–Leu166 are compositionally biased toward polar residues. Positions Pro174–Ser186 are enriched in basic residues. Residues Lys184–Ala210 adopt a coiled-coil conformation. Over residues His187–Ala200 the composition is skewed to basic and acidic residues. Polar residues-rich tracts occupy residues Ala210–Gly219 and Cys239–Lys249. Basic and acidic residues predominate over residues Asp268 to Glu287. Residues Ala298–Thr328 adopt a coiled-coil conformation. Positions Asn365–Arg374 are enriched in low complexity. The stretch at Met443–Glu628 forms a coiled coil.

Binds to purified microtubules via its C-terminus.

The protein resides in the cytoplasm. It is found in the cytoskeleton. The protein localises to the spindle. Its function is as follows. Involved in organization of the bipolar mitotic spindle. Required for bipolar spindle assembly, mitosis progression and cytokinesis. May act by stabilizing interphase microtubules. This Homo sapiens (Human) protein is Microtubule-associated protein 9 (MAP9).